A 324-amino-acid chain; its full sequence is Malate dehydrogenase (324 aa).

Residues 7–13 (GAAGGIG) and Asp34 contribute to the NAD(+) site. Substrate contacts are provided by Arg88 and Arg94. Residues Asn101 and 124–126 (VTN) each bind NAD(+). Asn126 and Arg160 together coordinate substrate. Residue His184 is the Proton acceptor of the active site. Residue Met238 coordinates NAD(+).

It belongs to the LDH/MDH superfamily. MDH type 1 family. As to quaternary structure, homodimer.

It carries out the reaction (S)-malate + NAD(+) = oxaloacetate + NADH + H(+). Functionally, catalyzes the reversible oxidation of malate to oxaloacetate. This is Malate dehydrogenase from Haemophilus ducreyi (strain 35000HP / ATCC 700724).